The following is a 301-amino-acid chain: NADH-cytochrome b5 reductase 2 (301 aa).

The helical transmembrane segment at 14-30 threads the bilayer; that stretch reads FLVPFAGATALSIGLAL. The 105-residue stretch at 51 to 155 folds into the FAD-binding FR-type domain; it reads NEWVDLKLSK…KGPIVKWKWE (105 aa). Residue 158-193 participates in FAD binding; that stretch reads QFKSIALIGGGTGITPLYQLLHQITSNPKDNTKVNL.

Belongs to the flavoprotein pyridine nucleotide cytochrome reductase family. FAD is required as a cofactor.

It localises to the mitochondrion outer membrane. It catalyses the reaction 2 Fe(III)-[cytochrome b5] + NADH = 2 Fe(II)-[cytochrome b5] + NAD(+) + H(+). Functionally, may mediate the reduction of outer membrane cytochrome b5. This Candida albicans (strain SC5314 / ATCC MYA-2876) (Yeast) protein is NADH-cytochrome b5 reductase 2 (MCR1).